The following is a 66-amino-acid chain: Protein translocase subunit SecE (66 aa).

Residues 34-54 (LVVIVAVFVFSLICLVLDYGI) traverse the membrane as a helical segment.

It belongs to the SecE/SEC61-gamma family. As to quaternary structure, component of the Sec protein translocase complex. Heterotrimer consisting of SecY, SecE and SecG subunits. The heterotrimers can form oligomers, although 1 heterotrimer is thought to be able to translocate proteins. Interacts with the ribosome. Interacts with SecDF, and other proteins may be involved. Interacts with SecA.

The protein localises to the cell inner membrane. Essential subunit of the Sec protein translocation channel SecYEG. Clamps together the 2 halves of SecY. May contact the channel plug during translocation. In Rickettsia bellii (strain RML369-C), this protein is Protein translocase subunit SecE.